A 195-amino-acid chain; its full sequence is COMM domain-containing protein 3 (195 aa).

Residues 124–193 form the COMM domain; the sequence is HITDVSWRLE…DASKSLERAT (70 aa).

Belongs to the COMM domain-containing protein 3 family. As to quaternary structure, component of the commander complex consisting of the CCC subcomplex and the retriever subcomplex. Component of the CCC (COMMD/CCDC22/CCDC93) subcomplex consisting of COMMD1, COMMD2, COMMD3, COMMD4, COMMD5, COMMD6, COMMD7, COMMD8, COMMD9, COMMD10, CCDC22 and CCDC93; within the complex forms a heterodimer with COMMD2. Interacts with NFKB1/p105. Interacts with CCDC22, CCDC93, SCNN1B, CUL3, CUL4A, CUL4B, CUL5. As to expression, widely expressed with highest expression in thymus.

It is found in the cytoplasm. The protein resides in the nucleus. Its function is as follows. Scaffold protein in the commander complex that is essential for endosomal recycling of transmembrane cargos; the commander complex is composed of the CCC subcomplex and the retriever subcomplex. May modulate activity of cullin-RING E3 ubiquitin ligase (CRL) complexes. May down-regulate activation of NF-kappa-B. Modulates Na(+) transport in epithelial cells by regulation of apical cell surface expression of amiloride-sensitive sodium channel (ENaC) subunits. The chain is COMM domain-containing protein 3 (COMMD3) from Homo sapiens (Human).